The following is a 385-amino-acid chain: 8-amino-7-oxononanoate synthase (385 aa).

Residue arginine 21 coordinates substrate. 108 to 109 (GY) lines the pyridoxal 5'-phosphate pocket. Residue histidine 133 coordinates substrate. 3 residues coordinate pyridoxal 5'-phosphate: serine 179, histidine 207, and threonine 233. Lysine 236 is modified (N6-(pyridoxal phosphate)lysine). Residue threonine 350 participates in substrate binding.

This sequence belongs to the class-II pyridoxal-phosphate-dependent aminotransferase family. BioF subfamily. As to quaternary structure, homodimer. It depends on pyridoxal 5'-phosphate as a cofactor.

The enzyme catalyses 6-carboxyhexanoyl-[ACP] + L-alanine + H(+) = (8S)-8-amino-7-oxononanoate + holo-[ACP] + CO2. The protein operates within cofactor biosynthesis; biotin biosynthesis. Catalyzes the decarboxylative condensation of pimeloyl-[acyl-carrier protein] and L-alanine to produce 8-amino-7-oxononanoate (AON), [acyl-carrier protein], and carbon dioxide. The sequence is that of 8-amino-7-oxononanoate synthase from Pectobacterium atrosepticum (strain SCRI 1043 / ATCC BAA-672) (Erwinia carotovora subsp. atroseptica).